The chain runs to 501 residues: Glycerol kinase (501 aa).

Residue threonine 11 coordinates ADP. ATP-binding residues include threonine 11, threonine 12, and serine 13. Threonine 11 contacts sn-glycerol 3-phosphate. Arginine 15 serves as a coordination point for ADP. Sn-glycerol 3-phosphate is bound by residues arginine 81, glutamate 82, tyrosine 133, and aspartate 242. Glycerol contacts are provided by arginine 81, glutamate 82, tyrosine 133, aspartate 242, and glutamine 243. ADP-binding residues include threonine 264 and glycine 307. ATP contacts are provided by threonine 264, glycine 307, glutamine 311, and glycine 409. ADP contacts are provided by glycine 409 and asparagine 413.

It belongs to the FGGY kinase family.

It carries out the reaction glycerol + ATP = sn-glycerol 3-phosphate + ADP + H(+). Its pathway is polyol metabolism; glycerol degradation via glycerol kinase pathway; sn-glycerol 3-phosphate from glycerol: step 1/1. With respect to regulation, inhibited by fructose 1,6-bisphosphate (FBP). In terms of biological role, key enzyme in the regulation of glycerol uptake and metabolism. Catalyzes the phosphorylation of glycerol to yield sn-glycerol 3-phosphate. The chain is Glycerol kinase from Borrelia garinii subsp. bavariensis (strain ATCC BAA-2496 / DSM 23469 / PBi) (Borreliella bavariensis).